Reading from the N-terminus, the 343-residue chain is Succinylglutamate desuccinylase (343 aa).

Zn(2+)-binding residues include His60, Glu63, and His157. Glu221 is a catalytic residue.

Belongs to the AspA/AstE family. Succinylglutamate desuccinylase subfamily. Zn(2+) serves as cofactor.

It carries out the reaction N-succinyl-L-glutamate + H2O = L-glutamate + succinate. It participates in amino-acid degradation; L-arginine degradation via AST pathway; L-glutamate and succinate from L-arginine: step 5/5. Its function is as follows. Transforms N(2)-succinylglutamate into succinate and glutamate. This Idiomarina loihiensis (strain ATCC BAA-735 / DSM 15497 / L2-TR) protein is Succinylglutamate desuccinylase.